A 331-amino-acid polypeptide reads, in one-letter code: Nucleotide sugar transporter SLC35B4 (331 aa).

The next 11 helical transmembrane spans lie at 4-24 (ALAVGLVFAGCCSNVIFLELL), 30-50 (GCGNIVTFAQFLFIAVEGFLF), 59-79 (PAIPIRYYAIMVTMFFTVSVV), 92-112 (LHMIFRSGSLIANMILGIIIL), 117-137 (SIFKYTSIALVSVGIFICTFM), 153-173 (GFQAFVWWLLGIGALTFALLM), 201-221 (ALPLPGFVFLASDIYDHAVLF), 229-249 (IPVIGVTLPIMWFYLLMNIIT), 251-267 (YVCIRGVFILTTECASL), 268-288 (TVTLVVTLRKFVSLIFSILYF), and 291-311 (PFTLWHWLGTLFVFIGTLMYT). The Mediates endoplasmic reticulum retention signature appears at 326–331 (KDSKKN).

Belongs to the nucleotide-sugar transporter family. SLC35B subfamily.

The protein localises to the endoplasmic reticulum membrane. The enzyme catalyses UDP-N-acetyl-alpha-D-glucosamine(in) + UDP-alpha-D-glucuronate(out) = UDP-N-acetyl-alpha-D-glucosamine(out) + UDP-alpha-D-glucuronate(in). It carries out the reaction UDP-alpha-D-xylose(in) + UDP-alpha-D-glucuronate(out) = UDP-alpha-D-xylose(out) + UDP-alpha-D-glucuronate(in). Antiporter that transports nucleotide sugars across the endoplasmic reticulum (ER) membrane in exchange for another nucleotide sugar. May couple UDP-alpha-D-glucuronate (UDP-GlcA) or UDP-alpha-D-xylose (UDP-Xyl) efflux to UDP-alpha-D-glucuronate (UDP-GlcA) influx into the ER lumen, which in turn stimulates glucuronidation and excretion of endobiotics and xenobiotics. In terms of biological role, has UDP-GlcA:UDP-GlcNAc antiporter activity. The protein is Nucleotide sugar transporter SLC35B4 (SLC35B4) of Homo sapiens (Human).